Here is a 262-residue protein sequence, read N- to C-terminus: Tritrans,polycis-undecaprenyl-diphosphate synthase (GGDP specific) (262 aa).

The active site involves D40. D40 contacts Mg(2+). Substrate is bound by residues 41 to 44 (GNRR), W45, and 85 to 87 (SAE). The Proton acceptor role is filled by N88. Substrate-binding positions include R92, R211, and 217 to 219 (RIS). Residue E230 participates in Mg(2+) binding.

Belongs to the UPP synthase family. In terms of assembly, homodimer. It depends on Mg(2+) as a cofactor.

The catalysed reaction is geranylgeranyl diphosphate + 7 isopentenyl diphosphate = tri-trans,hepta-cis-undecaprenyl diphosphate + 7 diphosphate. Generates tritrans,heptacis-undecaprenyl diphosphate from isopentenyl pyrophosphate (IPP) and geranylgeranyl diphosphate. It is probably the precursor of glycosyl carrier lipids. This is Tritrans,polycis-undecaprenyl-diphosphate synthase (GGDP specific) (uppS) from Sulfolobus acidocaldarius (strain ATCC 33909 / DSM 639 / JCM 8929 / NBRC 15157 / NCIMB 11770).